A 490-amino-acid polypeptide reads, in one-letter code: Cytochrome P450 2C6 (490 aa).

N6-acetyllysine occurs at positions 249 and 375. Cys-435 is a heme binding site.

This sequence belongs to the cytochrome P450 family. It depends on heme as a cofactor.

It localises to the endoplasmic reticulum membrane. Its subcellular location is the microsome membrane. The catalysed reaction is an organic molecule + reduced [NADPH--hemoprotein reductase] + O2 = an alcohol + oxidized [NADPH--hemoprotein reductase] + H2O + H(+). Functionally, cytochromes P450 are a group of heme-thiolate monooxygenases. In liver microsomes, this enzyme is involved in an NADPH-dependent electron transport pathway. It oxidizes a variety of structurally unrelated compounds, including steroids, fatty acids, and xenobiotics. In Rattus norvegicus (Rat), this protein is Cytochrome P450 2C6 (Cyp2c6).